We begin with the raw amino-acid sequence, 318 residues long: Ribose-phosphate pyrophosphokinase 1 (318 aa).

An ATP-binding site is contributed by 96–101; it reads RQDKKD. Mg(2+) contacts are provided by aspartate 128, histidine 130, aspartate 139, and aspartate 143. Histidine 130 is a binding site for ATP. The interval 212–227 is binding of phosphoribosylpyrophosphate; the sequence is KDRVAILVDDMADTCG.

The protein belongs to the ribose-phosphate pyrophosphokinase family. As to quaternary structure, homodimer. The active form is probably a hexamer composed of 3 homodimers. The cofactor is Mg(2+).

It carries out the reaction D-ribose 5-phosphate + ATP = 5-phospho-alpha-D-ribose 1-diphosphate + AMP + H(+). It participates in metabolic intermediate biosynthesis; 5-phospho-alpha-D-ribose 1-diphosphate biosynthesis; 5-phospho-alpha-D-ribose 1-diphosphate from D-ribose 5-phosphate (route I): step 1/1. Its activity is regulated as follows. Activated by magnesium and inorganic phosphate. In terms of biological role, catalyzes the synthesis of phosphoribosylpyrophosphate (PRPP) that is essential for nucleotide synthesis. The protein is Ribose-phosphate pyrophosphokinase 1 (PRPS1) of Macaca fascicularis (Crab-eating macaque).